Here is a 200-residue protein sequence, read N- to C-terminus: Large ribosomal subunit protein uL4 (200 aa).

Residues 44 to 70 are disordered; it reads AQKTRAEVTGSGKKPWRQKGTGRARSG.

The protein belongs to the universal ribosomal protein uL4 family. Part of the 50S ribosomal subunit.

One of the primary rRNA binding proteins, this protein initially binds near the 5'-end of the 23S rRNA. It is important during the early stages of 50S assembly. It makes multiple contacts with different domains of the 23S rRNA in the assembled 50S subunit and ribosome. Its function is as follows. Protein L4 is a both a transcriptional repressor and a translational repressor protein. It regulates transcription of the S10 operon (to which L4 belongs) by causing premature termination of transcription within the S10 leader. L4 controls the translation of the S10 operon by binding to its mRNA. In terms of biological role, this protein when expressed in E.coli represses both transcription and translation of the endogenous S10 operon. As the M.morganii S10 leader can be regulated in vitro by the E.coli L4 protein this strongly suggests the endogenous protein controls its own S10 operon in a similar fashion. Functionally, forms part of the polypeptide exit tunnel. The protein is Large ribosomal subunit protein uL4 (rplD) of Morganella morganii (Proteus morganii).